The following is a 724-amino-acid chain: Hyaluronan mediated motility receptor (724 aa).

2 disordered regions span residues 1-22 (MSFP…PSPG) and 40-81 (KSQR…QKND). A Phosphoserine modification is found at Ser-20. Basic and acidic residues-rich tracts occupy residues 46 to 60 (QQKE…DKDT) and 70 to 81 (KSSESKESQKND). N-linked (GlcNAc...) asparagine glycosylation is found at Asn-133, Asn-477, Asn-567, and Asn-588. Residues 365–546 (EEMVKEKNLF…ITDLQNQLKQ (182 aa)) are required for interaction with FAM83D. Hyaluronic acid-binding stretches follow at residues 635-645 (KQKIKHVVKLK) and 657-666 (KLRCQLAKKK). A Phosphothreonine modification is found at Thr-703.

Interacts with ANKRD26. Interacts with DYNLL1. Interacts with FAM83D/CHICA. As to expression, expressed in testis. Expressed in the breast.

The protein localises to the cell surface. The protein resides in the cytoplasm. Its subcellular location is the cytoskeleton. It is found in the spindle. In terms of biological role, receptor for hyaluronic acid (HA). Involved in cell motility. When hyaluronan binds to HMMR, the phosphorylation of a number of proteins, including PTK2/FAK1 occurs. May also be involved in cellular transformation and metastasis formation, and in regulating extracellular-regulated kinase (ERK) activity. May act as a regulator of adipogenisis. The polypeptide is Hyaluronan mediated motility receptor (HMMR) (Homo sapiens (Human)).